A 359-amino-acid polypeptide reads, in one-letter code: Zinc finger CCCH domain-containing protein 20 (359 aa).

3 C3H1-type zinc fingers span residues threonine 75–glutamate 107, tyrosine 119–phenylalanine 145, and arginine 153–aspartate 177. Disordered regions lie at residues serine 207 to serine 226 and methionine 334 to methionine 359.

This chain is Zinc finger CCCH domain-containing protein 20, found in Arabidopsis thaliana (Mouse-ear cress).